An 89-amino-acid chain; its full sequence is Acylphosphatase (89 aa).

The region spanning 3-89 (CKRWILYGRV…GNYGSFHIEY (87 aa)) is the Acylphosphatase-like domain. Residues Arg18 and Asn36 contribute to the active site.

This sequence belongs to the acylphosphatase family.

It catalyses the reaction an acyl phosphate + H2O = a carboxylate + phosphate + H(+). This is Acylphosphatase (acyP) from Petrotoga mobilis (strain DSM 10674 / SJ95).